Consider the following 262-residue polypeptide: 14-3-3-like protein A (262 aa).

The disordered stretch occupies residues 240–262; that stretch reads DNAEEGGDEIKEAASKPEGEGHS. The span at 247 to 262 shows a compositional bias: basic and acidic residues; sequence DEIKEAASKPEGEGHS.

Belongs to the 14-3-3 family.

The sequence is that of 14-3-3-like protein A from Hordeum vulgare (Barley).